The sequence spans 406 residues: MTMTLSVVAVTHRTAPVTIRERLSLPVEQQCQWLQRWGNQVPEIVLLVTCHRTEVYWLDGEETAHRGVEWLAELGGLTVEELERWVLQRSGAEAVRHAFCVAAGLDSRVVGEPQILGQVRRARDLARAAGTLGPILDRLFSCSLATGRMVRVRAGWSTGKRSLARVAVREAARLCSDLQSARVLVLGAGETGRDVIAALCRCQPAVVWWTNRSPGRLAQIPSEEPVRIVDWSEWPRLVTEADVVFVATNAPEPIVRLEHVTRHARLPRLLVDLAVPRNVDPAISDVPGIRVVTIDDLPADPVPVAAWDGVAVEPYVERAVQRYLRWLEARSIAAEIRAAHETLQSMLERELEKVLRLALRDPARTGEVKRVAAASMARKTLFPLFRALESEPQRVALALRLLAYDR.

Residues 49-52, serine 107, 112-114, and glutamine 118 each bind substrate; these read TCHR and EPQ. Residue cysteine 50 is the Nucleophile of the active site. 187-192 contacts NADP(+); sequence GAGETG.

The protein belongs to the glutamyl-tRNA reductase family. In terms of assembly, homodimer.

It catalyses the reaction (S)-4-amino-5-oxopentanoate + tRNA(Glu) + NADP(+) = L-glutamyl-tRNA(Glu) + NADPH + H(+). The protein operates within porphyrin-containing compound metabolism; protoporphyrin-IX biosynthesis; 5-aminolevulinate from L-glutamyl-tRNA(Glu): step 1/2. Catalyzes the NADPH-dependent reduction of glutamyl-tRNA(Glu) to glutamate 1-semialdehyde (GSA). The polypeptide is Glutamyl-tRNA reductase (Thermomicrobium roseum (strain ATCC 27502 / DSM 5159 / P-2)).